We begin with the raw amino-acid sequence, 2760 residues long: A-kinase anchor protein 13 (2760 aa).

8 disordered regions span residues 356 to 388 (CSHK…QDSC), 442 to 517 (PDAR…EPKQ), 530 to 577 (AAGA…VLPA), 604 to 711 (SSLD…AAHN), 729 to 857 (EKDL…EQEG), 890 to 940 (GGSI…QEIS), 954 to 1029 (EKAL…ASEA), and 1132 to 1162 (EGTD…DLPT). Positions 378 to 388 (DSRSASHQDSC) are enriched in polar residues. The segment covering 442 to 454 (PDARQHSSGRELP) has biased composition (basic and acidic residues). Positions 482 to 504 (QNSKPQVGESAKERLENSDISSA) are important for interaction with PRKAR2A. The span at 530-547 (AAGADAPAEASPAWSPEE) shows a compositional bias: low complexity. 3 stretches are compositionally biased toward polar residues: residues 620–638 (KQNS…SQAP), 654–664 (CPQSTETSSGG), and 701–711 (DTVTSDTAAHN). Low complexity predominate over residues 769–780 (SSFSLASSPESE). Ser776 bears the Phosphoserine mark. Thr801 carries the post-translational modification Phosphothreonine. Residues 814-826 (PDGRDLNDTDKVG) are compositionally biased toward basic and acidic residues. Over residues 839–849 (ELQTSMGNTSP) the composition is skewed to polar residues. Residues 906 to 931 (GKDKATKCPSVKEDVHSSEMSREDQR) are compositionally biased toward basic and acidic residues. The residue at position 932 (Thr932) is a Phosphothreonine. Polar residues-rich tracts occupy residues 958-972 (QHSN…CLQT) and 1001-1020 (TSLS…SGSS). Ser962 is modified (phosphoserine). Positions 1213–1228 (SIEETATRIVEAVIKQ) are important for interaction with PRKAR2A. Disordered stretches follow at residues 1392-1411 (GVLQ…PSDE), 1425-1508 (LLCD…VPAN), and 1520-1539 (SPFR…DAEM). Residues 1428-1439 (DTTGSSSSTDDT) are compositionally biased toward low complexity. A compositionally biased stretch (polar residues) spans 1449 to 1472 (GSDVSLPQTSKLNRSRNHQSSNGF). 5 positions are modified to phosphoserine: Ser1450, Ser1468, Ser1501, Ser1526, and Ser1585. The segment at 1546–1695 (QVLGHVVRRP…SRPFHSASAN (150 aa)) is important for interaction with MAP2K3. The tract at residues 1592-1628 (GGGVGNKPSSSLEISSANSSELRNPFSGEEQRSSLMS) is disordered. The segment covering 1600 to 1611 (SSSLEISSANSS) has biased composition (low complexity). 3 positions are modified to phosphoserine: Ser1625, Ser1628, and Ser1630. At Lys1654 the chain carries N6-methyllysine. The interval 1733–1755 (RNKMSSSKKSKKEKDKKTLNGHT) is disordered. The Phorbol-ester/DAG-type zinc finger occupies 1753–1800 (GHTFSPIPIVGPINCSQCMKPFTNKDAYTCASCGAFVHKGCRENLASC). Phosphoserine occurs at positions 1838, 1857, and 1891. Positions 1881 to 2760 (MSNTWKFLSH…VPAEGEEIFC (880 aa)) are interaction with ESR1. Thr1892 carries the post-translational modification Phosphothreonine. A phosphoserine mark is found at Ser1894 and Ser1907. In terms of domain architecture, DH spans 1956–2153 (KRQEVIYELM…KDVIGAVDSK (198 aa)). The PH domain occupies 2176–2280 (MRMKSGQMFA…WIQIIQDTIN (105 aa)). Ser2292 and Ser2345 each carry phosphoserine. Positions 2292-2329 (SENEEEKRLLDTKARELKEQLQQKDQQILLLLEEKEMI) form a coiled coil. Phosphothreonine is present on Thr2415. The disordered stretch occupies residues 2422 to 2450 (HQLNASKGGEKEEGDDGQDLRRTESDSGL). Residues 2439 to 2450 (QDLRRTESDSGL) are compositionally biased toward basic and acidic residues. Residues Ser2511 and Ser2514 each carry the phosphoserine modification. Residues 2516-2632 (LIEQEKQRSL…LSQRQMEQDL (117 aa)) are a coiled coil. Disordered stretches follow at residues 2568–2588 (AERE…REEL) and 2660–2760 (TPSI…EIFC). Polar residues-rich tracts occupy residues 2660–2684 (TPSI…SISR) and 2696–2711 (SSAS…SQAP). A Phosphoserine modification is found at Ser2676. Residues 2743 to 2752 (PGDGPAPEVP) show a composition bias toward low complexity.

In terms of assembly, interacts with the cAMP-dependent protein kinase (PKA) holoenzyme and with the regulatory subunit PRKAR2A. Interacts with RHOA. Also interacts with RHOB and RHOC. Identified in a ternary complex with RHOA and PRKAR2A. Identified in a complex with NR3C1 and RHOA. Interacts with BRAF and KSR1. Identified in a complex with BRAF and KSR1. Component of a signaling complex containing at least AKAP13, PKN1, MAPK14, ZAK and MAP2K3. Within this complex, AKAP13 interacts directly with PKN1, which in turn recruits MAPK14, MAP2K3 and ZAK. Interacts (phosphorylated form) with YWHAB and YWHAZ. Interaction with YWHAB inhibits activation of RHOA, interferes with PKN1 binding and activation of MAP kinases. Interacts with GNA12. Interacts with IKBKB. Interacts with ESR1, THRA, PPARA and NME2. Interacts (via the C-terminal domain after the PH domain) with MEF2C and RXRB. Interacts (via the C-terminal domain after the PH domain) with PRKD1. Detected in bone osteoblasts (at protein level).

It is found in the cytoplasm. The protein localises to the cytosol. Its subcellular location is the cell cortex. The protein resides in the nucleus. It localises to the membrane. Its function is as follows. Scaffold protein that plays an important role in assembling signaling complexes downstream of several types of G protein-coupled receptors. Activates RHOA in response to signaling via G protein-coupled receptors via its function as Rho guanine nucleotide exchange factor. May also activate other Rho family members. Part of a kinase signaling complex that links ADRA1A and ADRA1B adrenergic receptor signaling to the activation of downstream p38 MAP kinases, such as MAPK11 and MAPK14. Part of a signaling complex that links ADRA1B signaling to the activation of RHOA and IKBKB/IKKB, leading to increased NF-kappa-B transcriptional activity. Part of a RHOA-dependent signaling cascade that mediates responses to lysophosphatidic acid (LPA), a signaling molecule that activates G-protein coupled receptors and potentiates transcriptional activation of the glucocorticoid receptor NR3C1. Part of a signaling cascade that stimulates MEF2C-dependent gene expression in response to lysophosphatidic acid (LPA). Part of a signaling pathway that activates MAPK11 and/or MAPK14 and leads to increased transcription activation of the estrogen receptors ESR1 and ESR2. Part of a signaling cascade that links cAMP and EGFR signaling to BRAF signaling and to PKA-mediated phosphorylation of KSR1, leading to the activation of downstream MAP kinases, such as MAPK1 or MAPK3. Functions as a scaffold protein that anchors cAMP-dependent protein kinase (PKA) and PRKD1. This promotes activation of PRKD1, leading to increased phosphorylation of HDAC5 and ultimately cardiomyocyte hypertrophy. Has no guanine nucleotide exchange activity on CDC42, Ras or Rac. Required for normal embryonic heart development, and in particular for normal sarcomere formation in the developing cardiomyocytes. Plays a role in cardiomyocyte growth and cardiac hypertrophy in response to activation of the beta-adrenergic receptor by phenylephrine or isoproterenol. Required for normal adaptive cardiac hypertrophy in response to pressure overload. Plays a role in osteogenesis. The polypeptide is A-kinase anchor protein 13 (Rattus norvegicus (Rat)).